A 428-amino-acid chain; its full sequence is MGPPPGIGVYCRGGCGAARLLAWCFLLALSPHAPGSRGAEAVWTAYLNVSWRVPHTGVNRTVWELSEEGVYGQDSPLEPVSGVLVPPDGPGALNACNPHTNFTVPTVWGSTVQVSWLALIQRGGGCTFADKIHLASERGASGAVIFNFPGTRNEVIPMSHPGAGDIVAIMIGNLKGTKILQSIQRGIQVTMVIEVGKKHGPWVNHYSIFFVSVSFFIITAATVGYFIFYSARRLRNARAQSRKQRQLKADAKKAIGKLQLRTLKQGDKEIGPDGDSCAVCIELYKPNDLVRILTCNHIFHKTCVDPWLLEHRTCPMCKCDILKALGIEVDVEDGSVSLQVPVSNEASNTASPHEEDSRSETASSGYASVQGADEPPLEEHAQSANENLQLVNHEANSVAVDVVPHVDNPTFEEDETPDQEAAVREIKS.

Residues 1 to 38 (MGPPPGIGVYCRGGCGAARLLAWCFLLALSPHAPGSRG) form the signal peptide. 3 N-linked (GlcNAc...) asparagine glycosylation sites follow: Asn-48, Asn-59, and Asn-101. In terms of domain architecture, PA spans 75-183 (SPLEPVSGVL…LKGTKILQSI (109 aa)). Residues 208 to 228 (IFFVSVSFFIITAATVGYFIF) traverse the membrane as a helical segment. Residues 277–318 (CAVCIELYKPNDLVRILTCNHIFHKTCVDPWLLEHRTCPMCK) form an RING-type; atypical zinc finger. A compositionally biased stretch (polar residues) spans 342–351 (VSNEASNTAS). The disordered stretch occupies residues 342–428 (VSNEASNTAS…QEAAVREIKS (87 aa)).

Auto-ubiquitinated. Controls the development of T-cell clonal anergy by ubiquitination. As to expression, expressed in brain, kidney, heart, liver, ovary, testis and thymus. Expression increased as early as 4 hours by 5- to 7-fold in anergized cultures as compared to resting or activated cells.

The protein localises to the cytoplasm. It is found in the endomembrane system. It localises to the cytoskeleton. The protein resides in the perinuclear region. It catalyses the reaction S-ubiquitinyl-[E2 ubiquitin-conjugating enzyme]-L-cysteine + [acceptor protein]-L-lysine = [E2 ubiquitin-conjugating enzyme]-L-cysteine + N(6)-ubiquitinyl-[acceptor protein]-L-lysine.. It functions in the pathway protein modification; protein ubiquitination. Functionally, E3 ubiquitin-protein ligase that catalyzes 'Lys-27', 'Lys-48'- or 'Lys-63'-linked polyubiquitin chains formation and plays a role in different biological processes such as modulation of immune response, cytoskeletal dynamics or protein homeostasis. Inhibits IL2 and IL4 transcription, thereby playing an important role in the induction of the anergic phenotype, a long-term stable state of T-lymphocyte unresponsiveness to antigenic stimulation associated with the blockade of interleukin production. Ubiquitinates ARPC5 with 'Lys-48' linkages and COR1A with 'Lys-63' linkages leading to their degradation, down-regulation of these cytoskeletal components results in impaired lamellipodium formation and reduced accumulation of F-actin at the immunological synapse. Functions in the patterning of the dorsal ectoderm; sensitizes ectoderm to respond to neural-inducing signals. Plays a positive role in innate immune response by promoting 'Lys-63'-linked ubiquitination of TBK1 after RNA- or DNA-virus infection. Regulates alveolar macrophage activation and neutrophil infiltration by interacting with TLR4, targeting it for degradation, and inhibiting NF-kappa-B activation, hence decreasing pro-inflammatory cytokines. Negatively regulates the IL-3/STAT5 signaling pathway by facilitating 'Lys-27'-linked polyubiquitination of IL3RA leading to its degradation via lysosomal pathway. Directly regulates the N-glycosylation process in the endoplasmic reticulum by targeting the glycosyl-transferase RPN1 for ubiquitination and degradation. Other substrates targeted for degradation by RNF128 include transmembrane proteins CD40L, CD83 or the tetraspanin CD151. The protein is E3 ubiquitin-protein ligase RNF128 (Rnf128) of Mus musculus (Mouse).